Here is a 142-residue protein sequence, read N- to C-terminus: gSG7 salivary protein (142 aa).

The N-terminal stretch at 1–26 (MAARMTIMLPLAVALICLLQTEPGMA) is a signal peptide. Disulfide bonds link Cys-84–Cys-139 and Cys-107–Cys-117.

Its subcellular location is the secreted. In terms of biological role, salivary protein that moderately inhibits the alternative pathway for complement system activation in the host. This is gSG7 salivary protein from Anopheles darlingi (Mosquito).